The chain runs to 239 residues: 4-hydroxy-tetrahydrodipicolinate reductase (239 aa).

NAD(+) contacts are provided by residues G8 to M13, G78 to T80, and S102 to M105. The Proton donor/acceptor role is filled by H134. H135 contributes to the (S)-2,3,4,5-tetrahydrodipicolinate binding site. The Proton donor role is filled by K138. A (S)-2,3,4,5-tetrahydrodipicolinate-binding site is contributed by G144–T145.

This sequence belongs to the DapB family.

The protein resides in the cytoplasm. The catalysed reaction is (S)-2,3,4,5-tetrahydrodipicolinate + NAD(+) + H2O = (2S,4S)-4-hydroxy-2,3,4,5-tetrahydrodipicolinate + NADH + H(+). It carries out the reaction (S)-2,3,4,5-tetrahydrodipicolinate + NADP(+) + H2O = (2S,4S)-4-hydroxy-2,3,4,5-tetrahydrodipicolinate + NADPH + H(+). The protein operates within amino-acid biosynthesis; L-lysine biosynthesis via DAP pathway; (S)-tetrahydrodipicolinate from L-aspartate: step 4/4. Functionally, catalyzes the conversion of 4-hydroxy-tetrahydrodipicolinate (HTPA) to tetrahydrodipicolinate. The sequence is that of 4-hydroxy-tetrahydrodipicolinate reductase from Rickettsia peacockii (strain Rustic).